A 272-amino-acid polypeptide reads, in one-letter code: 2-amino-3,7-dideoxy-D-threo-hept-6-ulosonate synthase (272 aa).

Aspartate 33 serves as the catalytic Proton acceptor. 1-deoxy-D-threo-hexo-2,5-diulose 6-phosphate contacts are provided by residues 33–37 and 153–155; these read DHGVS and YPR. Catalysis depends on tyrosine 153, which acts as the Proton donor. Lysine 184 (schiff-base intermediate with substrate) is an active-site residue. 1-deoxy-D-threo-hexo-2,5-diulose 6-phosphate contacts are provided by residues 209-210 and 237-238; these read GG and GR.

It belongs to the DeoC/FbaB aldolase family. ADHS subfamily. Homodecamer.

It catalyses the reaction 1-deoxy-D-threo-hexo-2,5-diulose 6-phosphate + L-aspartate 4-semialdehyde = 2,3-dioxopropyl phosphate + 2-amino-2,3,7-trideoxy-D-lyxo-hept-6-ulosonate. Its function is as follows. Catalyzes a transaldol reaction between 6-deoxy-5-ketofructose 1-phosphate (DKFP) and L-aspartate semialdehyde (ASA) with an elimination of hydroxypyruvaldehyde phosphate to yield 2-amino-3,7-dideoxy-D-threo-hept-6-ulosonate (ADH). Plays a key role in an alternative pathway of the biosynthesis of 3-dehydroquinate (DHQ), which is involved in the canonical pathway for the biosynthesis of aromatic amino acids and which is also a precursor for the biosynthesis of p-aminobenzoic acid (PABA) in M.maripaludis. Does not possess fructose-bisphosphate (FBP) aldolase activity. The polypeptide is 2-amino-3,7-dideoxy-D-threo-hept-6-ulosonate synthase (Methanococcus maripaludis (strain DSM 14266 / JCM 13030 / NBRC 101832 / S2 / LL)).